The chain runs to 382 residues: Pregnancy-associated glycoprotein 1 (382 aa).

The N-terminal stretch at 1 to 15 is a signal peptide; sequence MKWLVLLGLVAFSEC. The propeptide at 16–53 is activation peptide; it reads IVKIPLRRVKTMRNTLSGKKMLNSFLKEHAYRLSQISF. N-linked (GlcNAc...) asparagine glycosylation is found at N57 and N74. The region spanning 71–379 is the Peptidase A1 domain; sequence YVGNITIGTP…DRGNDRIGLA (309 aa). A disulfide bridge links C102 with C110. N128 is a glycosylation site (N-linked (GlcNAc...) asparagine). Disulfide bonds link C263–C267 and C305–C339.

Belongs to the peptidase A1 family. In terms of tissue distribution, trophoblast and placental tissue. Produced specifically in the invasive binucleate cells of the placenta.

It localises to the secreted. The protein localises to the extracellular space. Functionally, has no proteolytic activity. In Ovis aries (Sheep), this protein is Pregnancy-associated glycoprotein 1.